The sequence spans 431 residues: Histidine--tRNA ligase (431 aa).

It belongs to the class-II aminoacyl-tRNA synthetase family. As to quaternary structure, homodimer.

It localises to the cytoplasm. It carries out the reaction tRNA(His) + L-histidine + ATP = L-histidyl-tRNA(His) + AMP + diphosphate + H(+). The sequence is that of Histidine--tRNA ligase from Neisseria gonorrhoeae (strain ATCC 700825 / FA 1090).